Reading from the N-terminus, the 606-residue chain is ATP-dependent rRNA helicase spb4 (606 aa).

Positions 1–29 (MSFQSINIDKWLKNAVAAQGFKKMTPVQA) match the Q motif motif. A Helicase ATP-binding domain is found at 32–213 (IPLFLKNKDL…KIAGLRNSVR (182 aa)). 45 to 52 (AVTGSGKT) contacts ATP. A DEAD box motif is present at residues 161-164 (DEAD). The 155-residue stretch at 246 to 400 (CMIHLLCTIE…ALDLSRLKVL (155 aa)) folds into the Helicase C-terminal domain. Residues 521-574 (KQKEVKEKRNTRREKRKSKKEFLKAQKNEASNNLKQEIVSKAGAQETENDDLID) are disordered. Positions 521–601 (KQKEVKEKRN…KSKKRKNQAS (81 aa)) form a coiled coil. Residues 529–539 (RNTRREKRKSK) are compositionally biased toward basic residues.

This sequence belongs to the DEAD box helicase family. DDX55/SPB4 subfamily. As to quaternary structure, component of pre-60S ribosomal complexes.

The protein resides in the nucleus. It is found in the nucleolus. It carries out the reaction ATP + H2O = ADP + phosphate + H(+). Its function is as follows. ATP-binding RNA helicase involved in the biogenesis of 60S ribosomal subunits. Binds 90S pre-ribosomal particles and dissociates from pre-60S ribosomal particles after processing of 27SB pre-rRNA. Required for the normal formation of 18S rRNA through the processing of pre-rRNAs at sites A0, A1 and A2, and the normal formation of 25S and 5.8S rRNAs through the processing of pre-rRNAs at sites C1 and C2. This chain is ATP-dependent rRNA helicase spb4, found in Schizosaccharomyces pombe (strain 972 / ATCC 24843) (Fission yeast).